A 750-amino-acid polypeptide reads, in one-letter code: Photosystem I P700 chlorophyll a apoprotein A1 (750 aa).

The next 8 helical transmembrane spans lie at valine 70 to alanine 93, leucine 156 to histidine 179, leucine 195 to leucine 219, threonine 291 to tyrosine 309, tryptophan 346 to tyrosine 369, leucine 385 to valine 411, alanine 433 to histidine 455, and phenylalanine 531 to leucine 549. Cysteine 573 and cysteine 582 together coordinate [4Fe-4S] cluster. A run of 2 helical transmembrane segments spans residues histidine 589 to tryptophan 610 and leucine 664 to phenylalanine 686. A chlorophyll a'-binding site is contributed by histidine 675. Chlorophyll a is bound by residues methionine 683 and tyrosine 691. Residue tryptophan 692 coordinates phylloquinone. Residues alanine 724–alanine 744 traverse the membrane as a helical segment.

The protein belongs to the PsaA/PsaB family. In terms of assembly, the PsaA/B heterodimer binds the P700 chlorophyll special pair and subsequent electron acceptors. PSI consists of a core antenna complex that captures photons, and an electron transfer chain that converts photonic excitation into a charge separation. The eukaryotic PSI reaction center is composed of at least 11 subunits. P700 is a chlorophyll a/chlorophyll a' dimer, A0 is one or more chlorophyll a, A1 is one or both phylloquinones and FX is a shared 4Fe-4S iron-sulfur center. serves as cofactor.

The protein resides in the plastid. It localises to the chloroplast thylakoid membrane. It catalyses the reaction reduced [plastocyanin] + hnu + oxidized [2Fe-2S]-[ferredoxin] = oxidized [plastocyanin] + reduced [2Fe-2S]-[ferredoxin]. PsaA and PsaB bind P700, the primary electron donor of photosystem I (PSI), as well as the electron acceptors A0, A1 and FX. PSI is a plastocyanin-ferredoxin oxidoreductase, converting photonic excitation into a charge separation, which transfers an electron from the donor P700 chlorophyll pair to the spectroscopically characterized acceptors A0, A1, FX, FA and FB in turn. Oxidized P700 is reduced on the lumenal side of the thylakoid membrane by plastocyanin. The chain is Photosystem I P700 chlorophyll a apoprotein A1 from Huperzia lucidula (Shining clubmoss).